The following is a 396-amino-acid chain: 1-deoxy-D-xylulose 5-phosphate reductoisomerase (396 aa).

NADPH is bound by residues threonine 13, glycine 14, serine 15, isoleucine 16, and asparagine 127. Lysine 128 provides a ligand contact to 1-deoxy-D-xylulose 5-phosphate. An NADPH-binding site is contributed by glutamate 129. Aspartate 153 contacts Mn(2+). Residues serine 154, glutamate 155, serine 184, and histidine 207 each coordinate 1-deoxy-D-xylulose 5-phosphate. Glutamate 155 contributes to the Mn(2+) binding site. Glycine 213 is an NADPH binding site. The 1-deoxy-D-xylulose 5-phosphate site is built by serine 220, asparagine 225, lysine 226, and glutamate 229. Glutamate 229 contributes to the Mn(2+) binding site.

Belongs to the DXR family. Requires Mg(2+) as cofactor. Mn(2+) is required as a cofactor.

It carries out the reaction 2-C-methyl-D-erythritol 4-phosphate + NADP(+) = 1-deoxy-D-xylulose 5-phosphate + NADPH + H(+). It functions in the pathway isoprenoid biosynthesis; isopentenyl diphosphate biosynthesis via DXP pathway; isopentenyl diphosphate from 1-deoxy-D-xylulose 5-phosphate: step 1/6. Inhibited by fosmidomycin and 3-(N-acetyl-N-hydroxyamino)-propylphosphonic acid (FR-900098). Functionally, catalyzes the NADPH-dependent rearrangement and reduction of 1-deoxy-D-xylulose-5-phosphate (DXP) to 2-C-methyl-D-erythritol 4-phosphate (MEP). In Pseudomonas aeruginosa (strain ATCC 15692 / DSM 22644 / CIP 104116 / JCM 14847 / LMG 12228 / 1C / PRS 101 / PAO1), this protein is 1-deoxy-D-xylulose 5-phosphate reductoisomerase.